The sequence spans 311 residues: Cytochrome f (311 aa).

A signal peptide spans Met-1–Ala-27. Positions 28, 48, 51, and 52 each coordinate heme. A helical membrane pass occupies residues Ile-277 to Lys-297.

The protein belongs to the cytochrome f family. The 4 large subunits of the cytochrome b6-f complex are cytochrome b6, subunit IV (17 kDa polypeptide, PetD), cytochrome f and the Rieske protein, while the 4 small subunits are PetG, PetL, PetM and PetN. The complex functions as a dimer. It depends on heme as a cofactor.

It localises to the cellular thylakoid membrane. Its function is as follows. Component of the cytochrome b6-f complex, which mediates electron transfer between photosystem II (PSII) and photosystem I (PSI), cyclic electron flow around PSI, and state transitions. The polypeptide is Cytochrome f (Parasynechococcus marenigrum (strain WH8102)).